A 251-amino-acid chain; its full sequence is Small ribosomal subunit protein uS2 (251 aa).

The protein belongs to the universal ribosomal protein uS2 family.

The chain is Small ribosomal subunit protein uS2 from Deinococcus deserti (strain DSM 17065 / CIP 109153 / LMG 22923 / VCD115).